The primary structure comprises 87 residues: Small ribosomal subunit protein uS15 (87 aa).

It belongs to the universal ribosomal protein uS15 family. As to quaternary structure, part of the 30S ribosomal subunit. Forms a bridge to the 50S subunit in the 70S ribosome, contacting the 23S rRNA.

Its function is as follows. One of the primary rRNA binding proteins, it binds directly to 16S rRNA where it helps nucleate assembly of the platform of the 30S subunit by binding and bridging several RNA helices of the 16S rRNA. Functionally, forms an intersubunit bridge (bridge B4) with the 23S rRNA of the 50S subunit in the ribosome. The polypeptide is Small ribosomal subunit protein uS15 (Alkaliphilus oremlandii (strain OhILAs) (Clostridium oremlandii (strain OhILAs))).